The following is a 747-amino-acid chain: Cysteine--tRNA ligase, cytoplasmic (747 aa).

The disordered stretch occupies residues 1–25 (MTDSWERGKGRRTQPPWSAPNTQAQ). A compositionally biased stretch (polar residues) spans 15–25 (PPWSAPNTQAQ). A Zn(2+)-binding site is contributed by Cys54. Position 55 (Gly55) interacts with L-cysteine. Residues 56–66 (PTVYDASHMGH) carry the 'HIGH' region motif. Thr95 serves as a coordination point for L-cysteine. The 'KIIK' region signature appears at 100-103 (KIIK). Residues Cys347, His372, and Glu376 each coordinate Zn(2+). L-cysteine is bound at residue His372. The short motif at 405–409 (KMSKS) is the 'KMSKS' region element. Lys408 lines the ATP pocket. Residues 651–683 (EEKRKAEEEKQRKKEEAARKKQQQEAAKLEKMK) are compositionally biased toward basic and acidic residues. A disordered region spans residues 651 to 722 (EEKRKAEEEK…KELSKGQSKK (72 aa)).

It belongs to the class-I aminoacyl-tRNA synthetase family. As to quaternary structure, homodimer. Zn(2+) serves as cofactor.

The protein localises to the cytoplasm. It catalyses the reaction tRNA(Cys) + L-cysteine + ATP = L-cysteinyl-tRNA(Cys) + AMP + diphosphate. Functionally, catalyzes the ATP-dependent ligation of cysteine to tRNA(Cys). The polypeptide is Cysteine--tRNA ligase, cytoplasmic (cars1) (Xenopus tropicalis (Western clawed frog)).